The chain runs to 227 residues: Testis expressed protein 56 (227 aa).

As to expression, expressed predominantly in the testis.

This Mus musculus (Mouse) protein is Testis expressed protein 56.